A 511-amino-acid chain; its full sequence is Cytochrome P450 monooxygenase prhD (511 aa).

N7 carries N-linked (GlcNAc...) asparagine glycosylation. Residues 10-30 (GNGMGLLIPLGLSWLIWTILL) form a helical membrane-spanning segment. A heme-binding site is contributed by C444. N502 is a glycosylation site (N-linked (GlcNAc...) asparagine).

Belongs to the cytochrome P450 family. Heme is required as a cofactor.

It localises to the membrane. It participates in secondary metabolite biosynthesis; terpenoid biosynthesis. Functionally, cytochrome P450 monooxygenase; part of the gene cluster that mediates the biosynthesis of paraherquonin, a meroterpenoid with a unique, highly congested hexacyclic molecular architecture. The first step of the pathway is the synthesis of 3,5-dimethylorsellinic acid (DMOA) by the polyketide synthase prhL. Synthesis of DMOA is followed by farnesylation by the prenyltransferase prhE, methylesterification by the methyl-transferase prhM, epoxidation of the prenyl chain by the flavin-dependent monooxygenase prhF, and cyclization of the farnesyl moiety by the terpene cyclase prhH, to yield the tetracyclic intermediate, protoaustinoid A. The short chain dehydrogenase prhI then oxidizes the C-3 alcohol group of the terpene cyclase product to transform protoaustinoid A into protoaustinoid B. The FAD-binding monooxygenase prhJ catalyzes the oxidation of protoaustinoid B into preaustinoid A which is further oxidized into preaustinoid A1 by FAD-binding monooxygenase phrK. Finally, prhA leads to berkeleydione via the berkeleyone B intermediate. PrhA is a multifunctional dioxygenase that first desaturates at C5-C6 to form berkeleyone B, followed by rearrangement of the A/B-ring to form the cycloheptadiene moiety in berkeleydione. Berkeleydione serves as the key intermediate for the biosynthesis of paraherquonin as well as many other meroterpenoids. The cytochrome P450 monooxygenases prhB, prhD, and prhN, as well as the isomerase prhC, are probably involved in the late stage of paraherquonin biosynthesis, after the production of berkeleydione. Especially prhC might be a multifunctional enzyme that catalyzes the D-ring expansion via intramolecular methoxy rearrangement, as well as the hydrolysis of the expanded D-ring. The sequence is that of Cytochrome P450 monooxygenase prhD from Penicillium brasilianum.